Reading from the N-terminus, the 158-residue chain is Lipoprotein signal peptidase (158 aa).

The next 4 membrane-spanning stretches (helical) occupy residues 7–27, 38–58, 67–87, and 95–115; these read LFWI…YWVV, ILPG…FSLF, WLSL…PVLE, and GLIL…GYVV. Catalysis depends on residues aspartate 116 and aspartate 132. A helical membrane pass occupies residues 125–145; the sequence is FAVFNMADSFISIGIVCLLLA.

The protein belongs to the peptidase A8 family.

Its subcellular location is the cell inner membrane. It catalyses the reaction Release of signal peptides from bacterial membrane prolipoproteins. Hydrolyzes -Xaa-Yaa-Zaa-|-(S,diacylglyceryl)Cys-, in which Xaa is hydrophobic (preferably Leu), and Yaa (Ala or Ser) and Zaa (Gly or Ala) have small, neutral side chains.. Its pathway is protein modification; lipoprotein biosynthesis (signal peptide cleavage). Its function is as follows. This protein specifically catalyzes the removal of signal peptides from prolipoproteins. This chain is Lipoprotein signal peptidase, found in Trichormus variabilis (strain ATCC 29413 / PCC 7937) (Anabaena variabilis).